We begin with the raw amino-acid sequence, 224 residues long: tRNA (guanine-N(7)-)-methyltransferase (224 aa).

S-adenosyl-L-methionine contacts are provided by Glu54, Glu79, Asp106, and Asp129. Residue Asp129 is part of the active site. Lys133 and Asp165 together coordinate substrate.

Belongs to the class I-like SAM-binding methyltransferase superfamily. TrmB family.

It carries out the reaction guanosine(46) in tRNA + S-adenosyl-L-methionine = N(7)-methylguanosine(46) in tRNA + S-adenosyl-L-homocysteine. Its pathway is tRNA modification; N(7)-methylguanine-tRNA biosynthesis. Functionally, catalyzes the formation of N(7)-methylguanine at position 46 (m7G46) in tRNA. The chain is tRNA (guanine-N(7)-)-methyltransferase from Chlamydia felis (strain Fe/C-56) (Chlamydophila felis).